The sequence spans 348 residues: Dihydroorotase (348 aa).

Residues histidine 17 and histidine 19 each contribute to the Zn(2+) site. Substrate contacts are provided by residues 19 to 21 (HLR) and asparagine 45. 3 residues coordinate Zn(2+): lysine 103, histidine 140, and histidine 178. The residue at position 103 (lysine 103) is an N6-carboxylysine. Substrate is bound at residue histidine 140. Position 223 (leucine 223) interacts with substrate. A Zn(2+)-binding site is contributed by aspartate 251. Aspartate 251 is a catalytic residue. 2 residues coordinate substrate: histidine 255 and alanine 267.

This sequence belongs to the metallo-dependent hydrolases superfamily. DHOase family. Class II DHOase subfamily. As to quaternary structure, homodimer. Zn(2+) is required as a cofactor.

The catalysed reaction is (S)-dihydroorotate + H2O = N-carbamoyl-L-aspartate + H(+). Its pathway is pyrimidine metabolism; UMP biosynthesis via de novo pathway; (S)-dihydroorotate from bicarbonate: step 3/3. Catalyzes the reversible cyclization of carbamoyl aspartate to dihydroorotate. The sequence is that of Dihydroorotase from Salmonella paratyphi C (strain RKS4594).